A 508-amino-acid polypeptide reads, in one-letter code: Histidine ammonia-lyase (508 aa).

A cross-link (5-imidazolinone (Ala-Gly)) is located at residues 141-143 (ASG). Ser142 is subject to 2,3-didehydroalanine (Ser).

It belongs to the PAL/histidase family. In terms of processing, contains an active site 4-methylidene-imidazol-5-one (MIO), which is formed autocatalytically by cyclization and dehydration of residues Ala-Ser-Gly.

The protein resides in the cytoplasm. The enzyme catalyses L-histidine = trans-urocanate + NH4(+). Its pathway is amino-acid degradation; L-histidine degradation into L-glutamate; N-formimidoyl-L-glutamate from L-histidine: step 1/3. The protein is Histidine ammonia-lyase (hutH) of Bacillus subtilis (strain 168).